The chain runs to 245 residues: Gas vesicle protein F (245 aa).

Belongs to the gas vesicle GvpF/GvpL family. Binds GvpA.

The protein resides in the gas vesicle. Its function is as follows. A minor component of the gas vesicle, may be involved in preventing GvpA aggregation during gas vesicle nucleation. Gas vesicles (GV) are hollow, gas filled proteinaceous nanostructures. During planktonic growth they allow positioning of the organism at a favorable depth for light or nutrient acquisition. The sequence is that of Gas vesicle protein F from Dolichospermum flosaquae (Anabaena flos-aquae).